Here is a 282-residue protein sequence, read N- to C-terminus: MSNSILKVPDQNPQEIVALFSQQEAYAKLGKYKDEIWDVYQKVFIAALTTGETVLAKKCWNRLNDRFHKSPRVEGLYGMFLEATASEKDAMSYYNSKLSEDPTHTVIYKRKLALLRSMGQTKECIQGLINYLDTFYNDLEAWAELADIYVSVEAFESAIFCYEEMVLLQPFEPRLFARLGDLYFVLAQSNATNYWFSLKHYCRSVEICEEYFHGWFGISKCCQQLLELSRTELKRLLSKVNEKISDTFPDTESVRQLYQLSLKKSDLFAQKQPKLKALLEQC.

TPR repeat units lie at residues 16-50 (IVAL…ALTT), 71-104 (PRVE…DPTH), 139-172 (LEAW…QPFE), and 174-211 (RLFA…CEEY).

It is found in the cytoplasm. The protein localises to the nucleus. In terms of biological role, may be involved in cell cycle regulation. This chain is TPR repeat protein oca3 (oca3), found in Schizosaccharomyces pombe (strain 972 / ATCC 24843) (Fission yeast).